A 136-amino-acid chain; its full sequence is Large ribosomal subunit protein uL16c (136 aa).

The tract at residues 1 to 20 (MLSPKRTRFRKQHRGRMKGK) is disordered.

This sequence belongs to the universal ribosomal protein uL16 family. As to quaternary structure, part of the 50S ribosomal subunit.

Its subcellular location is the plastid. The protein resides in the chloroplast. The polypeptide is Large ribosomal subunit protein uL16c (Lolium perenne (Perennial ryegrass)).